We begin with the raw amino-acid sequence, 325 residues long: Glutarate 2-hydroxylase (325 aa).

H160, D162, and H292 together coordinate Fe cation.

It belongs to the glutarate hydroxylase family. As to quaternary structure, homotetramer. Fe(2+) is required as a cofactor.

The enzyme catalyses glutarate + 2-oxoglutarate + O2 = (S)-2-hydroxyglutarate + succinate + CO2. It functions in the pathway amino-acid degradation. Its function is as follows. Acts as an alpha-ketoglutarate-dependent dioxygenase catalyzing hydroxylation of glutarate (GA) to L-2-hydroxyglutarate (L2HG). Functions in a L-lysine degradation pathway that proceeds via cadaverine, glutarate and L-2-hydroxyglutarate. This is Glutarate 2-hydroxylase from Escherichia fergusonii (strain ATCC 35469 / DSM 13698 / CCUG 18766 / IAM 14443 / JCM 21226 / LMG 7866 / NBRC 102419 / NCTC 12128 / CDC 0568-73).